Here is a 97-residue protein sequence, read N- to C-terminus: Small ribosomal subunit protein bS20 (97 aa).

Residues 1 to 22 form a disordered region; that stretch reads MANSKSALKRIRTSERNRLRNK.

The protein belongs to the bacterial ribosomal protein bS20 family.

Binds directly to 16S ribosomal RNA. This Crocosphaera subtropica (strain ATCC 51142 / BH68) (Cyanothece sp. (strain ATCC 51142)) protein is Small ribosomal subunit protein bS20.